Reading from the N-terminus, the 138-residue chain is Small ribosomal subunit protein bS18m (138 aa).

The protein belongs to the bacterial ribosomal protein bS18 family. In terms of assembly, component of the mitochondrial small ribosomal subunit. Mature mitochondrial ribosomes consist of a small (37S) and a large (54S) subunit. The 37S subunit contains at least 33 different proteins and 1 molecule of RNA (15S). The 54S subunit contains at least 45 different proteins and 1 molecule of RNA (21S).

Its subcellular location is the mitochondrion. The polypeptide is Small ribosomal subunit protein bS18m (RSM18) (Saccharomyces cerevisiae (strain RM11-1a) (Baker's yeast)).